We begin with the raw amino-acid sequence, 488 residues long: 3-octaprenyl-4-hydroxybenzoate carboxy-lyase (488 aa).

Residue asparagine 172 participates in Mn(2+) binding. Residues isoleucine 175 to arginine 177, arginine 189 to leucine 191, and arginine 194 to glycine 195 contribute to the prenylated FMN site. Glutamate 238 is a binding site for Mn(2+). Residue aspartate 287 is the Proton donor of the active site.

This sequence belongs to the UbiD family. As to quaternary structure, homohexamer. Prenylated FMN is required as a cofactor. Requires Mn(2+) as cofactor.

Its subcellular location is the cell membrane. It carries out the reaction a 4-hydroxy-3-(all-trans-polyprenyl)benzoate + H(+) = a 2-(all-trans-polyprenyl)phenol + CO2. The protein operates within cofactor biosynthesis; ubiquinone biosynthesis. In terms of biological role, catalyzes the decarboxylation of 3-octaprenyl-4-hydroxy benzoate to 2-octaprenylphenol, an intermediate step in ubiquinone biosynthesis. This Azotobacter vinelandii (strain DJ / ATCC BAA-1303) protein is 3-octaprenyl-4-hydroxybenzoate carboxy-lyase.